The primary structure comprises 319 residues: Protein HEXIM1 (319 aa).

The span at 1–22 (MELIKEETAPEDDSRGRQRDCR) shows a compositional bias: basic and acidic residues. Disordered regions lie at residues 1–111 (MELI…KKRR), 157–223 (LMEE…LQKD), 262–286 (NNWL…RVRE), and 299–319 (NELL…SQPS). Residues 24-35 (SVVSSKQVQRNQ) show a composition bias toward polar residues. Positions 49-61 (PMCRDRSDPEPRT) are enriched in basic and acidic residues. Residues 97 to 111 (GKKKHRRRPSKKKRR) are compositionally biased toward basic residues. A compositionally biased stretch (acidic residues) spans 185–202 (TASEDENFEAEEDDEEEG). Over residues 203–216 (GGGSDGMGRPGQAG) the composition is skewed to gly residues. Positions 240-306 (SKQELVREYL…ENNELLLKTP (67 aa)) form a coiled coil. Residues 306–319 (PASNEPGLNQSQPS) show a composition bias toward polar residues.

The protein belongs to the HEXIM family. Homooligomer and heterooligomer. Core component of the 7SK RNP complex.

Its subcellular location is the nucleus. The protein localises to the cytoplasm. Functionally, transcriptional regulator which functions as a general RNA polymerase II transcription inhibitor. Core component of the 7SK RNP complex: in cooperation with 7SK snRNA sequesters P-TEFb in a large inactive 7SK snRNP complex preventing RNA polymerase II phosphorylation and subsequent transcriptional elongation. Plays a role in the regulation of DNA virus-mediated innate immune response by assembling into the HDP-RNP complex, a complex that serves as a platform for IRF3 phosphorylation and subsequent innate immune response activation through the cGAS-STING pathway. This is Protein HEXIM1 (hexim1) from Danio rerio (Zebrafish).